Here is a 310-residue protein sequence, read N- to C-terminus: Protein-L-isoaspartate O-methyltransferase (310 aa).

2 disordered regions span residues 1-44 and 67-88; these read MSGE…DKPA and AKPA…PAAP. Basic and acidic residues predominate over residues 14–29; that stretch reads EDLKRAPRKSEGRPGE. Low complexity predominate over residues 32–44; sequence AAGAVPKAADKPA. Residues 75 to 86 are compositionally biased toward pro residues; that stretch reads PTAPKPALPKPA. Ser157 is a catalytic residue.

It belongs to the methyltransferase superfamily. L-isoaspartyl/D-aspartyl protein methyltransferase family.

Its subcellular location is the cytoplasm. The enzyme catalyses [protein]-L-isoaspartate + S-adenosyl-L-methionine = [protein]-L-isoaspartate alpha-methyl ester + S-adenosyl-L-homocysteine. Catalyzes the methyl esterification of L-isoaspartyl residues in peptides and proteins that result from spontaneous decomposition of normal L-aspartyl and L-asparaginyl residues. It plays a role in the repair and/or degradation of damaged proteins. This chain is Protein-L-isoaspartate O-methyltransferase, found in Burkholderia orbicola (strain MC0-3).